Reading from the N-terminus, the 311-residue chain is Pantothenate kinase (311 aa).

93–100 contributes to the ATP binding site; it reads GSVAVGKS.

Belongs to the prokaryotic pantothenate kinase family.

It localises to the cytoplasm. It catalyses the reaction (R)-pantothenate + ATP = (R)-4'-phosphopantothenate + ADP + H(+). It functions in the pathway cofactor biosynthesis; coenzyme A biosynthesis; CoA from (R)-pantothenate: step 1/5. This is Pantothenate kinase (coaA) from Haemophilus influenzae (strain ATCC 51907 / DSM 11121 / KW20 / Rd).